Reading from the N-terminus, the 65-residue chain is Large ribosomal subunit protein bL35 (65 aa).

Belongs to the bacterial ribosomal protein bL35 family.

The sequence is that of Large ribosomal subunit protein bL35 from Porphyromonas gingivalis (strain ATCC 33277 / DSM 20709 / CIP 103683 / JCM 12257 / NCTC 11834 / 2561).